The following is a 357-amino-acid chain: Adenosine deaminase (357 aa).

Positions 16 and 18 each coordinate Zn(2+). Substrate contacts are provided by H18, D20, and G185. H212 is a binding site for Zn(2+). Residue E215 is the Proton donor of the active site. D294 contributes to the Zn(2+) binding site. Substrate is bound at residue D295.

This sequence belongs to the metallo-dependent hydrolases superfamily. Adenosine and AMP deaminases family. Zn(2+) is required as a cofactor.

Its subcellular location is the cell membrane. The protein resides in the cell junction. It is found in the cytoplasmic vesicle lumen. It localises to the cytoplasm. The protein localises to the lysosome. The enzyme catalyses adenosine + H2O + H(+) = inosine + NH4(+). It catalyses the reaction 2'-deoxyadenosine + H2O + H(+) = 2'-deoxyinosine + NH4(+). Catalyzes the hydrolytic deamination of adenosine and 2-deoxyadenosine. Plays an important role in purine metabolism and in adenosine homeostasis. Modulates signaling by extracellular adenosine, and so contributes indirectly to cellular signaling events. May act as a positive regulator of T-cell coactivation. This Gallus gallus (Chicken) protein is Adenosine deaminase (ADA).